Reading from the N-terminus, the 304-residue chain is Nucleotide-binding protein ROP_69550 (304 aa).

ATP is bound at residue 24–31 (GLSGAGLQ). 75–78 (DVRS) provides a ligand contact to GTP.

Belongs to the RapZ-like family.

Its function is as follows. Displays ATPase and GTPase activities. This chain is Nucleotide-binding protein ROP_69550, found in Rhodococcus opacus (strain B4).